Consider the following 528-residue polypeptide: MKLSSAFVLSAITVAALGESITTTITATKNGHVYTKTVTQDATFVWAGEGAAVTSAVTEASTVAATSAAAETSVAAETSIVEPSTSAQGTSADEGSGSSITTTITATKNGHVYTKTVTQDATFVWTGEGERAPASTVATVETSVAAETSVAEPSTSAQGTSADEGSGSSITTTITATKNGHVYTKTVTQDATFVWTGEGERAPVSTVATVETAASPVTSVAEPSASTDEGSGSSITTTITATKNGHVYTKTVTQDATFVWTGEGERAPASTVATSSISAIEIPSTTEASIVEASSAVETSSAAETSSAVETSSAVETSSAVETSSAAETSSAAETSSAVETSSAVEISSAVETSAVETSSSSSTIETTSVKSLSPTQTSLSSSVQASSPIETSSAAKTSSVVPTFSSTTTENSSNSKSTSAVVASTTTSSESSATIVTPTRIGQAYTESSSRDAQSVRTHESNNWSSSSSASTKMVSSITRVQTTTAGIFTNGKSSTTPQIVNYTGAADSIAAGTGLMGAALAAVIFL.

A signal peptide spans 1 to 18 (MKLSSAFVLSAITVAALG). A run of 3 repeats spans residues 20–98 (SITT…GSGS), 99–168 (SITT…GSGS), and 169–233 (SITT…GSGS). The 4 X approximate tandem repeats stretch occupies residues 20 to 274 (SITTTITATK…ERAPASTVAT (255 aa)). Disordered regions lie at residues 79–100 (SIVEPSTSAQGTSADEGSGSSI), 145–172 (AAETSVAEPSTSAQGTSADEGSGSSITT), and 214–234 (ASPVTSVAEPSASTDEGSGSS). Composition is skewed to polar residues over residues 81-93 (VEPSTSAQGTSAD) and 145-163 (AAETSVAEPSTSAQGTSAD). Residues 234–274 (SITTTITATKNGHVYTKTVTQDATFVWTGEGERAPASTVAT) form a 1-4; truncated repeat. 12 consecutive repeat copies span residues 289 to 294 (SIVEAS), 295 to 300 (SAVETS), 301 to 306 (SAAETS), 307 to 312 (SAVETS), 313 to 318 (SAVETS), 319 to 324 (SAVETS), 325 to 330 (SAAETS), 331 to 336 (SAAETS), 337 to 342 (SAVETS), 343 to 348 (SAVEIS), 349 to 353 (SAVET), and 354 to 359 (SAVETS). The tract at residues 289–359 (SIVEASSAVE…AVETSAVETS (71 aa)) is 12 X 6 AA approximate tandem repeats, Ser/Thr-rich. Low complexity-rich tracts occupy residues 298-388 (ETSS…QASS) and 398-435 (TSSVVPTFSSTTTENSSNSKSTSAVVASTTTSSESSAT). The disordered stretch occupies residues 298-471 (ETSSAAETSS…SNNWSSSSSA (174 aa)). Asn412 carries N-linked (GlcNAc...) asparagine glycosylation. The segment covering 446–457 (YTESSSRDAQSV) has biased composition (polar residues). The span at 462-471 (SNNWSSSSSA) shows a compositional bias: low complexity. N-linked (GlcNAc...) asparagine glycosylation occurs at Asn464. 488–495 (GIFTNGKS) contacts ATP. The N-linked (GlcNAc...) asparagine glycan is linked to Asn503. Gly506 carries the GPI-anchor amidated glycine lipid modification. Residues 507 to 528 (AADSIAAGTGLMGAALAAVIFL) constitute a propeptide, removed in mature form.

In terms of processing, the GPI-anchor is attached to the protein in the endoplasmic reticulum and serves to target the protein to the cell surface. There, the glucosamine-inositol phospholipid moiety is cleaved off and the GPI-modified mannoprotein is covalently attached via its lipidless GPI glycan remnant to the 1,6-beta-glucan of the outer cell wall layer.

The protein resides in the secreted. Its subcellular location is the cell wall. It localises to the membrane. Involved in the uptake of non-siderophore sources of iron and the siderophores ferrioxamine B and ferrichrome. Has a role in the retention of iron in the cell wall and periplasmic space. This is Facilitator of iron transport 1 (FIT1) from Saccharomyces cerevisiae (strain ATCC 204508 / S288c) (Baker's yeast).